The chain runs to 393 residues: NAD(P)H-quinone oxidoreductase subunit H, chloroplastic (393 aa).

It belongs to the complex I 49 kDa subunit family. As to quaternary structure, NDH is composed of at least 16 different subunits, 5 of which are encoded in the nucleus.

The protein localises to the plastid. It is found in the chloroplast thylakoid membrane. The catalysed reaction is a plastoquinone + NADH + (n+1) H(+)(in) = a plastoquinol + NAD(+) + n H(+)(out). It carries out the reaction a plastoquinone + NADPH + (n+1) H(+)(in) = a plastoquinol + NADP(+) + n H(+)(out). In terms of biological role, NDH shuttles electrons from NAD(P)H:plastoquinone, via FMN and iron-sulfur (Fe-S) centers, to quinones in the photosynthetic chain and possibly in a chloroplast respiratory chain. The immediate electron acceptor for the enzyme in this species is believed to be plastoquinone. Couples the redox reaction to proton translocation, and thus conserves the redox energy in a proton gradient. The sequence is that of NAD(P)H-quinone oxidoreductase subunit H, chloroplastic from Populus alba (White poplar).